The following is a 956-amino-acid chain: Pollen-specific leucine-rich repeat extensin-like protein 1 (956 aa).

Residues 1–30 (MTRRTMEKPFGCFLLLFCFTISIFFYSAAA) form the signal peptide. LRR repeat units follow at residues 39-59 (LTRR…DIEY), 60-84 (EVDL…AWKK), 119-143 (VLVV…LGLL), 144-166 (TDVA…SLSK), 168-191 (TLMY…ALSW), 192-215 (PSLK…IFDK), 217-238 (LDAI…IGKS), 240-261 (ASVV…IGQM), 262-285 (KNLN…IGSL), 287-309 (NVTV…LSGL), and 310-332 (ANVE…NICK). N-linked (GlcNAc...) asparagine glycosylation is found at Asn273 and Asn287. N-linked (GlcNAc...) asparagine glycosylation occurs at Asn338. Residues 355–377 (PGSSQEKQFDDTSNCLQNRPNQK) show a composition bias toward polar residues. 2 disordered regions span residues 355–380 (PGSS…KSAK) and 397–956 (CAGG…FPGY). The segment covering 408–417 (SPKPTPTPKA) has biased composition (pro residues). Composition is skewed to basic and acidic residues over residues 431-441 (EPSKPKPEESP) and 452-534 (TPSH…EESP). A compositionally biased stretch (pro residues) spans 640 to 830 (QSPPVHSPPP…KPVTPLPPAT (191 aa)). The tract at residues 651-956 (PPVHSPPPPV…SPPPPMFPGY (306 aa)) is contains the Ser-Pro(4) repeats. The span at 837-852 (PTPSSSESGEISTPVQ) shows a compositional bias: polar residues. Residues 947-956 (SPPPPMFPGY) are compositionally biased toward pro residues.

Hydroxylated on proline residues in the S-P-P-P-P repeat. In terms of processing, O-glycosylated on hydroxyprolines. In terms of tissue distribution, expressed in flowers, stamen, pollen, and pollinated carpels.

The protein resides in the secreted. It localises to the cell wall. Modulates cell morphogenesis by regulating cell wall formation and assembly, and/or growth polarization. The chain is Pollen-specific leucine-rich repeat extensin-like protein 1 (PEX1) from Arabidopsis thaliana (Mouse-ear cress).